The chain runs to 139 residues: Gas vesicle protein A (139 aa).

The interval 113 to 139 is disordered; the sequence is EKLGDMLTSDEPEPRKATRVRSRRADR. Residues 129-139 show a composition bias toward basic residues; that stretch reads ATRVRSRRADR.

This sequence belongs to the gas vesicle GvpA family. In terms of assembly, the gas vesicle shell is 2 nm thick and consists of a single layer of this protein. It forms helical ribs nearly perpendicular to the long axis of the vesicle.

It is found in the gas vesicle shell. Functionally, gas vesicles are hollow, gas filled proteinaceous nanostructures found in some microorganisms. During planktonic growth they allow positioning of the organism at a favorable depth for light or nutrient acquisition. GvpA forms the protein shell. The protein is Gas vesicle protein A of Mycobacterium sp. (strain JLS).